The sequence spans 541 residues: Light-independent protochlorophyllide reductase subunit B (541 aa).

Asp36 lines the [4Fe-4S] cluster pocket. Asp290 (proton donor) is an active-site residue. 425–426 (GL) is a binding site for substrate.

It belongs to the ChlB/BchB/BchZ family. As to quaternary structure, protochlorophyllide reductase is composed of three subunits; ChlL, ChlN and ChlB. Forms a heterotetramer of two ChlB and two ChlN subunits. [4Fe-4S] cluster serves as cofactor.

The enzyme catalyses chlorophyllide a + oxidized 2[4Fe-4S]-[ferredoxin] + 2 ADP + 2 phosphate = protochlorophyllide a + reduced 2[4Fe-4S]-[ferredoxin] + 2 ATP + 2 H2O. Its pathway is porphyrin-containing compound metabolism; chlorophyll biosynthesis (light-independent). Component of the dark-operative protochlorophyllide reductase (DPOR) that uses Mg-ATP and reduced ferredoxin to reduce ring D of protochlorophyllide (Pchlide) to form chlorophyllide a (Chlide). This reaction is light-independent. The NB-protein (ChlN-ChlB) is the catalytic component of the complex. This chain is Light-independent protochlorophyllide reductase subunit B, found in Synechococcus sp. (strain CC9902).